Consider the following 401-residue polypeptide: tRNA(Met) cytidine acetate ligase (401 aa).

ATP contacts are provided by residues 7-20 (VVEYNPFHNGHLYH), Gly101, Asn160, and 185-186 (RI).

This sequence belongs to the TmcAL family.

It is found in the cytoplasm. The enzyme catalyses cytidine(34) in elongator tRNA(Met) + acetate + ATP = N(4)-acetylcytidine(34) in elongator tRNA(Met) + AMP + diphosphate. Functionally, catalyzes the formation of N(4)-acetylcytidine (ac(4)C) at the wobble position of elongator tRNA(Met), using acetate and ATP as substrates. First activates an acetate ion to form acetyladenylate (Ac-AMP) and then transfers the acetyl group to tRNA to form ac(4)C34. The protein is tRNA(Met) cytidine acetate ligase of Anoxybacillus flavithermus (strain DSM 21510 / WK1).